The chain runs to 473 residues: Proline transporter 1 (473 aa).

Over residues 1–11 (MDQHQLDEENQ) the composition is skewed to basic and acidic residues. Residues 1 to 31 (MDQHQLDEENQRAALFHSSAPSSSLGADGEE) form a disordered region. Transmembrane regions (helical) follow at residues 65-85 (PWYQ…VLGY), 88-108 (SIMV…AAAI), 145-165 (LTWA…IILA), 188-208 (IALS…LSAL), 210-230 (IWLG…FVMS), 252-272 (IFTT…GMLP), 290-310 (LWFQ…MGYW), 333-353 (VANL…ASPM), 378-398 (VGVR…LPFL), 401-421 (FMSL…ANHM), and 437-457 (WHWL…VAAV).

Belongs to the amino acid/polyamine transporter 2 family. Amino acid/auxin permease (AAAP) (TC 2.A.18.3) subfamily. As to expression, expressed in roots, leaf blades and sheaths, stems and young panicle.

It localises to the cell membrane. Proline transporter that mediates proline transport across the plasma membrane when expressed in a heterologous system (Xenopus oocytes). This chain is Proline transporter 1 (PROT1), found in Oryza sativa subsp. japonica (Rice).